The sequence spans 972 residues: Isoleucine--tRNA ligase (972 aa).

The 'HIGH' region motif lies at 63–73 (PYANGNIHIGH). Residue Glu603 participates in L-isoleucyl-5'-AMP binding. The 'KMSKS' region motif lies at 644 to 648 (KMSKS). Lys647 provides a ligand contact to ATP.

The protein belongs to the class-I aminoacyl-tRNA synthetase family. IleS type 1 subfamily. In terms of assembly, monomer.

The protein resides in the cytoplasm. The enzyme catalyses tRNA(Ile) + L-isoleucine + ATP = L-isoleucyl-tRNA(Ile) + AMP + diphosphate. Its function is as follows. Catalyzes the attachment of isoleucine to tRNA(Ile). As IleRS can inadvertently accommodate and process structurally similar amino acids such as valine, to avoid such errors it has two additional distinct tRNA(Ile)-dependent editing activities. One activity is designated as 'pretransfer' editing and involves the hydrolysis of activated Val-AMP. The other activity is designated 'posttransfer' editing and involves deacylation of mischarged Val-tRNA(Ile). The sequence is that of Isoleucine--tRNA ligase from Brucella melitensis biotype 1 (strain ATCC 23456 / CCUG 17765 / NCTC 10094 / 16M).